The chain runs to 127 residues: Holo-[acyl-carrier-protein] synthase (127 aa).

Asp-8 and Glu-60 together coordinate Mg(2+).

It belongs to the P-Pant transferase superfamily. AcpS family. Mg(2+) is required as a cofactor.

Its subcellular location is the cytoplasm. The enzyme catalyses apo-[ACP] + CoA = holo-[ACP] + adenosine 3',5'-bisphosphate + H(+). In terms of biological role, transfers the 4'-phosphopantetheine moiety from coenzyme A to a Ser of acyl-carrier-protein. The sequence is that of Holo-[acyl-carrier-protein] synthase from Marinomonas sp. (strain MWYL1).